We begin with the raw amino-acid sequence, 470 residues long: Amino-acid permease RocC (470 aa).

12 consecutive transmembrane segments (helical) span residues phenylalanine 18–isoleucine 38, leucine 44–leucine 64, glycine 90–threonine 110, tryptophan 119–isoleucine 139, valine 159–phenylalanine 179, glycine 196–phenylalanine 216, valine 243–proline 263, isoleucine 281–valine 301, alanine 338–glutamate 358, valine 360–cysteine 380, leucine 409–proline 429, and isoleucine 433–isoleucine 453.

Belongs to the amino acid-polyamine-organocation (APC) superfamily.

It is found in the cell membrane. Its function is as follows. Putative transport protein involved in arginine degradative pathway. Probably transports arginine or ornithine. The protein is Amino-acid permease RocC (rocC) of Bacillus subtilis (strain 168).